A 416-amino-acid chain; its full sequence is CinA-like protein (416 aa).

Belongs to the CinA family.

The chain is CinA-like protein from Solibacter usitatus (strain Ellin6076).